The primary structure comprises 130 residues: Ribosome-binding factor A (130 aa).

This sequence belongs to the RbfA family. In terms of assembly, monomer. Binds 30S ribosomal subunits, but not 50S ribosomal subunits or 70S ribosomes.

Its subcellular location is the cytoplasm. Its function is as follows. One of several proteins that assist in the late maturation steps of the functional core of the 30S ribosomal subunit. Associates with free 30S ribosomal subunits (but not with 30S subunits that are part of 70S ribosomes or polysomes). Required for efficient processing of 16S rRNA. May interact with the 5'-terminal helix region of 16S rRNA. The sequence is that of Ribosome-binding factor A from Roseiflexus sp. (strain RS-1).